Reading from the N-terminus, the 105-residue chain is Large ribosomal subunit protein uL23 (105 aa).

This sequence belongs to the universal ribosomal protein uL23 family. Part of the 50S ribosomal subunit. Contacts protein L29, and trigger factor when it is bound to the ribosome.

Functionally, one of the early assembly proteins it binds 23S rRNA. One of the proteins that surrounds the polypeptide exit tunnel on the outside of the ribosome. Forms the main docking site for trigger factor binding to the ribosome. This Chloroherpeton thalassium (strain ATCC 35110 / GB-78) protein is Large ribosomal subunit protein uL23.